The sequence spans 486 residues: MKSLDDLDFDNRFARLGGAFSTEVLPDPIAEPRLVVASPAALALLDLPAETSDEALFAELFGGHKLWSEAEPRAMVYSGHQFGSYNPRLGDGRGLLLGEVINQAGEHWDLHLKGAGQTPYSRMGDGRAVLRSSIREFLASEALPALGIPSSRALCVIGSSTPVWREKKESAATLLRLAPSHVRFGHFEYFYYTRQHDQLKQLAAFVLEHHFADCNAAERPYAAMFRQVVERNAELIARWQAYGFCHGVMNTDNMSILGITFDYGPYAFLDDFDANHICNHSDDAGRYSFSNQVPIAHWNLAALAQALTPLVEVDELRASLDLFLPLYQAHYLDLMRRRLGLGVAAENDQALVQELLQRMQGSAVDYSLFFRRLGEETPERALASLRDDFVDREAFDRWAEAYRRRVEEEGGDQESRRRRMHAVNPLYVLRNYLAQQAIEAAEQGDYTEVRLLHQVLSRPFEEQPGMERFTRRPPDWGRHLEISCSS.

Residues G90, G92, R93, K113, D125, G126, R176, and R183 each coordinate ATP. D252 (proton acceptor) is an active-site residue. N253 and D262 together coordinate Mg(2+). D262 is a binding site for ATP.

It belongs to the SELO family. Requires Mg(2+) as cofactor. Mn(2+) is required as a cofactor.

The catalysed reaction is L-seryl-[protein] + ATP = 3-O-(5'-adenylyl)-L-seryl-[protein] + diphosphate. It catalyses the reaction L-threonyl-[protein] + ATP = 3-O-(5'-adenylyl)-L-threonyl-[protein] + diphosphate. The enzyme catalyses L-tyrosyl-[protein] + ATP = O-(5'-adenylyl)-L-tyrosyl-[protein] + diphosphate. It carries out the reaction L-histidyl-[protein] + UTP = N(tele)-(5'-uridylyl)-L-histidyl-[protein] + diphosphate. The catalysed reaction is L-seryl-[protein] + UTP = O-(5'-uridylyl)-L-seryl-[protein] + diphosphate. It catalyses the reaction L-tyrosyl-[protein] + UTP = O-(5'-uridylyl)-L-tyrosyl-[protein] + diphosphate. Its function is as follows. Nucleotidyltransferase involved in the post-translational modification of proteins. It can catalyze the addition of adenosine monophosphate (AMP) or uridine monophosphate (UMP) to a protein, resulting in modifications known as AMPylation and UMPylation. This Pseudomonas aeruginosa (strain LESB58) protein is Protein nucleotidyltransferase YdiU.